We begin with the raw amino-acid sequence, 172 residues long: 3-hydroxydecanoyl-[acyl-carrier-protein] dehydratase (172 aa).

His71 is a catalytic residue.

This sequence belongs to the thioester dehydratase family. FabA subfamily. In terms of assembly, homodimer.

Its subcellular location is the cytoplasm. The enzyme catalyses a (3R)-hydroxyacyl-[ACP] = a (2E)-enoyl-[ACP] + H2O. The catalysed reaction is (3R)-hydroxydecanoyl-[ACP] = (2E)-decenoyl-[ACP] + H2O. It carries out the reaction (2E)-decenoyl-[ACP] = (3Z)-decenoyl-[ACP]. Its pathway is lipid metabolism; fatty acid biosynthesis. Necessary for the introduction of cis unsaturation into fatty acids. Catalyzes the dehydration of (3R)-3-hydroxydecanoyl-ACP to E-(2)-decenoyl-ACP and then its isomerization to Z-(3)-decenoyl-ACP. Can catalyze the dehydratase reaction for beta-hydroxyacyl-ACPs with saturated chain lengths up to 16:0, being most active on intermediate chain length. The chain is 3-hydroxydecanoyl-[acyl-carrier-protein] dehydratase from Yersinia enterocolitica serotype O:8 / biotype 1B (strain NCTC 13174 / 8081).